Here is a 448-residue protein sequence, read N- to C-terminus: Probable tryptophanase (448 aa).

The residue at position 253 (lysine 253) is an N6-(pyridoxal phosphate)lysine.

It belongs to the beta-eliminating lyase family. Requires pyridoxal 5'-phosphate as cofactor.

It carries out the reaction L-tryptophan + H2O = indole + pyruvate + NH4(+). Its pathway is amino-acid degradation; L-tryptophan degradation via pyruvate pathway; indole and pyruvate from L-tryptophan: step 1/1. The chain is Probable tryptophanase from Halobacterium salinarum (strain ATCC 29341 / DSM 671 / R1).